The chain runs to 238 residues: uncharacterized protein (238 aa).

Transmembrane regions (helical) follow at residues I24–N44, G78–L98, I109–V129, F156–I176, M188–P208, and I216–L236.

This sequence belongs to the TatC family.

Its subcellular location is the plastid. The protein localises to the chloroplast membrane. This is an uncharacterized protein from Gracilaria tenuistipitata var. liui (Red alga).